The primary structure comprises 103 residues: Large ribosomal subunit protein bL21 (103 aa).

It belongs to the bacterial ribosomal protein bL21 family. Part of the 50S ribosomal subunit. Contacts protein L20.

Functionally, this protein binds to 23S rRNA in the presence of protein L20. This is Large ribosomal subunit protein bL21 from Laribacter hongkongensis (strain HLHK9).